A 287-amino-acid polypeptide reads, in one-letter code: ADP-dependent (S)-NAD(P)H-hydrate dehydratase (287 aa).

Residues 7 to 283 (GEDDVRKFVP…ELLPSVMKPF (277 aa)) form the YjeF C-terminal domain. (6S)-NADPHX is bound by residues Ala-42 and His-159. AMP-binding positions include 196 to 200 (KGPTD) and Gly-224. Asp-225 is a binding site for (6S)-NADPHX.

This sequence belongs to the NnrD/CARKD family. In terms of assembly, homotetramer. It depends on Mg(2+) as a cofactor.

The enzyme catalyses (6S)-NADHX + ADP = AMP + phosphate + NADH + H(+). The catalysed reaction is (6S)-NADPHX + ADP = AMP + phosphate + NADPH + H(+). Catalyzes the dehydration of the S-form of NAD(P)HX at the expense of ADP, which is converted to AMP. Together with NAD(P)HX epimerase, which catalyzes the epimerization of the S- and R-forms, the enzyme allows the repair of both epimers of NAD(P)HX, a damaged form of NAD(P)H that is a result of enzymatic or heat-dependent hydration. This is ADP-dependent (S)-NAD(P)H-hydrate dehydratase from Cenarchaeum symbiosum (strain A).